A 343-amino-acid chain; its full sequence is Tetraacyldisaccharide 4'-kinase (343 aa).

51-58 (HGGGAGKT) is an ATP binding site.

Belongs to the LpxK family.

It catalyses the reaction a lipid A disaccharide + ATP = a lipid IVA + ADP + H(+). The protein operates within glycolipid biosynthesis; lipid IV(A) biosynthesis; lipid IV(A) from (3R)-3-hydroxytetradecanoyl-[acyl-carrier-protein] and UDP-N-acetyl-alpha-D-glucosamine: step 6/6. Transfers the gamma-phosphate of ATP to the 4'-position of a tetraacyldisaccharide 1-phosphate intermediate (termed DS-1-P) to form tetraacyldisaccharide 1,4'-bis-phosphate (lipid IVA). The chain is Tetraacyldisaccharide 4'-kinase from Rhodopseudomonas palustris (strain BisB18).